The following is a 379-amino-acid chain: tRNA-specific 2-thiouridylase MnmA (379 aa).

Residues 23–30 and Leu-49 contribute to the ATP site; that span reads AMSGGVDS. The active-site Nucleophile is the Cys-117. A disulfide bridge connects residues Cys-117 and Cys-214. Gly-141 is an ATP binding site. The segment at 163-165 is interaction with tRNA; the sequence is RDQ. Cys-214 acts as the Cysteine persulfide intermediate in catalysis.

Belongs to the MnmA/TRMU family.

Its subcellular location is the cytoplasm. The enzyme catalyses S-sulfanyl-L-cysteinyl-[protein] + uridine(34) in tRNA + AH2 + ATP = 2-thiouridine(34) in tRNA + L-cysteinyl-[protein] + A + AMP + diphosphate + H(+). In terms of biological role, catalyzes the 2-thiolation of uridine at the wobble position (U34) of tRNA, leading to the formation of s(2)U34. The sequence is that of tRNA-specific 2-thiouridylase MnmA from Cereibacter sphaeroides (strain ATCC 17023 / DSM 158 / JCM 6121 / CCUG 31486 / LMG 2827 / NBRC 12203 / NCIMB 8253 / ATH 2.4.1.) (Rhodobacter sphaeroides).